Consider the following 160-residue polypeptide: Protein YpjC (160 aa).

The protein is Protein YpjC (ypjC) of Escherichia coli (strain K12).